The primary structure comprises 126 residues: Holo-[acyl-carrier-protein] synthase (126 aa).

The Mg(2+) site is built by D8 and E57.

This sequence belongs to the P-Pant transferase superfamily. AcpS family. The cofactor is Mg(2+).

The protein localises to the cytoplasm. The catalysed reaction is apo-[ACP] + CoA = holo-[ACP] + adenosine 3',5'-bisphosphate + H(+). Transfers the 4'-phosphopantetheine moiety from coenzyme A to a Ser of acyl-carrier-protein. The chain is Holo-[acyl-carrier-protein] synthase from Trichlorobacter lovleyi (strain ATCC BAA-1151 / DSM 17278 / SZ) (Geobacter lovleyi).